The sequence spans 171 residues: Protein hunchback (171 aa).

Disordered regions lie at residues 14 to 93 (PMSH…PMQI) and 124 to 171 (SNDK…KYMA). Positions 17-31 (HHHHHSHHSHGHHHS) are enriched in basic residues. Composition is skewed to low complexity over residues 32–42 (NSNSNASSPRQ) and 52–80 (SSSN…DTPL). Over residues 152–171 (EPEKDHDLMSNSSEDMKYMA) the composition is skewed to basic and acidic residues.

Belongs to the hunchback C2H2-type zinc-finger protein family.

It is found in the nucleus. Its function is as follows. Gap class segmentation protein that controls development of head structures. The sequence is that of Protein hunchback (hb) from Scaptomyza albovittata (Fruit fly).